The following is a 162-amino-acid chain: NADH-quinone oxidoreductase subunit I (162 aa).

4Fe-4S ferredoxin-type domains follow at residues Arg-54–Glu-83 and Thr-93–Ile-122. [4Fe-4S] cluster-binding residues include Cys-63, Cys-66, Cys-69, Cys-73, Cys-102, Cys-105, Cys-108, and Cys-112.

It belongs to the complex I 23 kDa subunit family. As to quaternary structure, NDH-1 is composed of 14 different subunits. Subunits NuoA, H, J, K, L, M, N constitute the membrane sector of the complex. [4Fe-4S] cluster serves as cofactor.

Its subcellular location is the cell inner membrane. The catalysed reaction is a quinone + NADH + 5 H(+)(in) = a quinol + NAD(+) + 4 H(+)(out). NDH-1 shuttles electrons from NADH, via FMN and iron-sulfur (Fe-S) centers, to quinones in the respiratory chain. The immediate electron acceptor for the enzyme in this species is believed to be ubiquinone. Couples the redox reaction to proton translocation (for every two electrons transferred, four hydrogen ions are translocated across the cytoplasmic membrane), and thus conserves the redox energy in a proton gradient. This is NADH-quinone oxidoreductase subunit I from Burkholderia cenocepacia (strain ATCC BAA-245 / DSM 16553 / LMG 16656 / NCTC 13227 / J2315 / CF5610) (Burkholderia cepacia (strain J2315)).